We begin with the raw amino-acid sequence, 898 residues long: MDESNDKENEFGDSFLEDSGDITRTTEDEDEAPLEPRFKYERLEGESTLPFMKTATFTSIDLHDKFIAIGTASGLIYILDHHGYGNFDSVPPLKPHRCAVSKLKFDETGSYILSCANDSKLVVSGIGNDKLCCTVNIQVMPKSICFSPDFIRQQSGHCFIMGERNLVLYEKRLFQYKASNLYSGSERDGFIHCCSWNDNLIAFTNDTGTRVYERGTEKILTSVQPTHDVDRVRSSRCPPKHMWMSENTLVIGWADTVTVLKIKGNEGMRKGEIHHIFHVSMFISGISYLPKNGSDYELFLVGLQMEGEDFDDCASVMSTMTTLTAMESSATATLKTCVIRPLGLKDYELQSEDEIVNIRLSTHTLPYMIHGLGIPYLSTYFILTTKQIIMAVPYGPEDGIKWRLQYKLYTEAFEMAKEHADMLAKTDVSPKKVGRKIIEGYLESKKARVAASWLSSICGDCKEEWEWAVDRFHDAKMSTLLGDVLPDSKPRLDPSAYEKVLLASLFNNVKLFRRLVQTWSPDLYMTSTIIDQTQWRIQQISKSEDIEDVEEVEKILMDALAHLYLYERKYESALKILMICQDFQIFNVIDKHQLFDLVKDQISDLMNINSERALRLLLDNADSVEPSFVMAKINGQPKLQLAYLTKLMSRNEGIEFADKAVQLYADHEKKKLLPFLKKNVNYNVTKARKLCSDRGFVEETIFLLAKSGNHYEAVKMMVREYKNIEKVIAYCKDQNDRDLWIHLLEVVADFPTHFSQLIIEASNCLDPILIMDKLPDDVDIPNLSEALEKLLTDFTNYVELQQCCYDSTLNDLHVLTNNLMLASDKSVSVSLMTRCSLCSQVIMNTGQDMIPRKFNDIKVFKCGHIFHLTCSASEIDRRQMIEDGICIACSDNSDHVNV.

The span at 1–10 (MDESNDKENE) shows a compositional bias: basic and acidic residues. Residues 1-35 (MDESNDKENEFGDSFLEDSGDITRTTEDEDEAPLE) form a disordered region. Residues 614-756 (LRLLLDNADS…VADFPTHFSQ (143 aa)) form a CHCR repeat. The segment at 835 to 890 (CSLCSQVIMNTGQDMIPRKFNDIKVFKCGHIFHLTCSASEIDRRQMIEDGICIACS) adopts an RING-type; atypical zinc-finger fold.

It belongs to the VPS41 family. As to quaternary structure, probable component of the homotypic fusion and vacuole protein sorting (HOPS) complex consisting of the core class C Vps proteins vps-11, vps-16, vps-18, and which further associates with vps-33.1, vps-39 and vps-41.

Its subcellular location is the endosome membrane. The protein localises to the late endosome. It is found in the lysosome. The protein resides in the golgi apparatus. It localises to the trans-Golgi network. Its subcellular location is the early endosome. The protein localises to the cytoplasmic vesicle. It is found in the clathrin-coated vesicle. Plays a role in vesicle-mediated protein trafficking to lysosomal compartments including the endocytic membrane transport pathways. Believed to act in part as a core component of the putative HOPS endosomal tethering complex which is proposed to be involved in the rab-5-to-rab-7 endosome conversion probably implicating sand-1, and via binding SNAREs and SNARE complexes to mediate tethering and docking events during SNARE-mediated membrane fusion. The HOPS complex is proposed to be recruited to rab-7 on the late endosomal membrane and to regulate late endocytic, phagocytic and autophagic traffic towards lysosomes. Within the HOPS complex, contributes to the normal development of gut granules in the adult intestine. May mediate the tethering of autophagosomes with lysosomes. Has a role in the negative regulation of apoptosis. Required for uptake of exogenous dsRNA which is used in experimental RNA silencing. This is Vacuolar protein sorting-associated protein 41 homolog from Caenorhabditis briggsae.